Consider the following 157-residue polypeptide: 2-C-methyl-D-erythritol 2,4-cyclodiphosphate synthase (157 aa).

A divalent metal cation contacts are provided by aspartate 8 and histidine 10. 4-CDP-2-C-methyl-D-erythritol 2-phosphate is bound by residues 8-10 (DVH) and 34-35 (HS). An a divalent metal cation-binding site is contributed by histidine 42. 4-CDP-2-C-methyl-D-erythritol 2-phosphate is bound by residues 56–58 (DIG), 61–65 (FPDTD), 100–106 (AQAPKMA), 132–135 (TTTE), phenylalanine 139, and arginine 142.

It belongs to the IspF family. As to quaternary structure, homotrimer. The cofactor is a divalent metal cation.

It catalyses the reaction 4-CDP-2-C-methyl-D-erythritol 2-phosphate = 2-C-methyl-D-erythritol 2,4-cyclic diphosphate + CMP. It functions in the pathway isoprenoid biosynthesis; isopentenyl diphosphate biosynthesis via DXP pathway; isopentenyl diphosphate from 1-deoxy-D-xylulose 5-phosphate: step 4/6. Involved in the biosynthesis of isopentenyl diphosphate (IPP) and dimethylallyl diphosphate (DMAPP), two major building blocks of isoprenoid compounds. Catalyzes the conversion of 4-diphosphocytidyl-2-C-methyl-D-erythritol 2-phosphate (CDP-ME2P) to 2-C-methyl-D-erythritol 2,4-cyclodiphosphate (ME-CPP) with a corresponding release of cytidine 5-monophosphate (CMP). This Pseudomonas aeruginosa (strain UCBPP-PA14) protein is 2-C-methyl-D-erythritol 2,4-cyclodiphosphate synthase.